The sequence spans 299 residues: MWLPWALLLLWVPGCFALSKCRTVAGPVGGSLSVQCPYEKEHRTLNKYWCRPPQIFLCDKIVETKGSAGKRNGRVSIRDSPANLSFTVTLENLTEEDAGTYWCGVDTPWLRDFHDPVVEVEVSVFPASTSMTPASITAAKTSTITTAFPPVSSTTLFAVGATHSASIQEETEEVVNSQLPLLLSLLALLLLLLVGASLLAWRMFQKWIKAGDHSELSQNPKQAATQSELHYANLELLMWPLQEKPAPPREVEVEYSTVASPREELHYASVVFDSNTNRIAAQRPREEEPDSDYSVIRKT.

The signal sequence occupies residues 1-17 (MWLPWALLLLWVPGCFA). At 18 to 180 (LSKCRTVAGP…TEEVVNSQLP (163 aa)) the chain is on the extracellular side. The 105-residue stretch at 19–123 (SKCRTVAGPV…HDPVVEVEVS (105 aa)) folds into the Ig-like V-type domain. Residues cysteine 36 and cysteine 103 are joined by a disulfide bond. Asparagine 83 and asparagine 92 each carry an N-linked (GlcNAc...) asparagine glycan. Residues 181–201 (LLLSLLALLLLLLVGASLLAW) traverse the membrane as a helical segment. At 202–299 (RMFQKWIKAG…DSDYSVIRKT (98 aa)) the chain is on the cytoplasmic side. The tract at residues 278–299 (RIAAQRPREEEPDSDYSVIRKT) is disordered. Tyrosine 293 is subject to Phosphotyrosine.

The protein belongs to the CD300 family. As to quaternary structure, upon tyrosine-phosphorylation, interacts with PTN6/SHP-1 and PTPN11/SHP-2 and INPP5D. Phosphorylated on tyrosine. Post-translationally, N-glycosylated. Expressed not only by natural killer (NK) cells but also by T-cell subsets, B-cells, dendritic cells, mast cells, granulocytes and monocytes.

It localises to the cell membrane. Its function is as follows. Inhibitory receptor which may contribute to the down-regulation of cytolytic activity in natural killer (NK) cells, and to the down-regulation of mast cell degranulation. Negatively regulates the Toll-like receptor (TLR) signaling mediated by MYD88 but not TRIF through activation of PTPN6. The chain is CMRF35-like molecule 8 (CD300A) from Homo sapiens (Human).